The primary structure comprises 302 residues: Oxygen-dependent coproporphyrinogen-III oxidase (302 aa).

Position 94 (Ser-94) interacts with substrate. Positions 98 and 108 each coordinate a divalent metal cation. His-108 serves as the catalytic Proton donor. 110-112 (NVR) contributes to the substrate binding site. Positions 147 and 177 each coordinate a divalent metal cation. The interval 242–277 (YVEFNLVFDRGTLFGLQSGGRAESILMSMPPVANWR) is important for dimerization. 260–262 (GGR) lines the substrate pocket.

It belongs to the aerobic coproporphyrinogen-III oxidase family. In terms of assembly, homodimer. A divalent metal cation is required as a cofactor.

It localises to the cytoplasm. The catalysed reaction is coproporphyrinogen III + O2 + 2 H(+) = protoporphyrinogen IX + 2 CO2 + 2 H2O. Its pathway is porphyrin-containing compound metabolism; protoporphyrin-IX biosynthesis; protoporphyrinogen-IX from coproporphyrinogen-III (O2 route): step 1/1. Functionally, involved in the heme biosynthesis. Catalyzes the aerobic oxidative decarboxylation of propionate groups of rings A and B of coproporphyrinogen-III to yield the vinyl groups in protoporphyrinogen-IX. The polypeptide is Oxygen-dependent coproporphyrinogen-III oxidase (Ralstonia pickettii (strain 12J)).